The primary structure comprises 76 residues: Anaredoxin (76 aa).

An HNH domain is found at 24 to 66 (CMVCWEVNSKANGHHLIPYSEGGSADIQNMMTLCPSCHTKYHK).

It belongs to the HNH nuclease family.

Functionally, putative P-450 reductase. This is Anaredoxin from Nostoc sp. (strain PCC 7120 / SAG 25.82 / UTEX 2576).